The chain runs to 147 residues: Small ribosomal subunit protein uS12 (147 aa).

Belongs to the universal ribosomal protein uS12 family. Part of the 30S ribosomal subunit.

Functionally, with S4 and S5 plays an important role in translational accuracy. Located at the interface of the 30S and 50S subunits. The polypeptide is Small ribosomal subunit protein uS12 (Pyrobaculum islandicum (strain DSM 4184 / JCM 9189 / GEO3)).